Consider the following 532-residue polypeptide: Light-independent protochlorophyllide reductase subunit B (532 aa).

Asp-36 contacts [4Fe-4S] cluster. The active-site Proton donor is Asp-282. 417 to 418 (GL) is a binding site for substrate.

Belongs to the ChlB/BchB/BchZ family. As to quaternary structure, protochlorophyllide reductase is composed of three subunits; BchL, BchN and BchB. Forms a heterotetramer of two BchB and two BchN subunits. Requires [4Fe-4S] cluster as cofactor.

The catalysed reaction is chlorophyllide a + oxidized 2[4Fe-4S]-[ferredoxin] + 2 ADP + 2 phosphate = protochlorophyllide a + reduced 2[4Fe-4S]-[ferredoxin] + 2 ATP + 2 H2O. It functions in the pathway porphyrin-containing compound metabolism; bacteriochlorophyll biosynthesis (light-independent). In terms of biological role, component of the dark-operative protochlorophyllide reductase (DPOR) that uses Mg-ATP and reduced ferredoxin to reduce ring D of protochlorophyllide (Pchlide) to form chlorophyllide a (Chlide). This reaction is light-independent. The NB-protein (BchN-BchB) is the catalytic component of the complex. This is Light-independent protochlorophyllide reductase subunit B from Methylobacterium radiotolerans (strain ATCC 27329 / DSM 1819 / JCM 2831 / NBRC 15690 / NCIMB 10815 / 0-1).